Consider the following 655-residue polypeptide: Broad substrate specificity ATP-binding cassette transporter ABCG2 (655 aa).

The Cytoplasmic portion of the chain corresponds to 1–395 (MSSSNVEVFI…KNLLGNPQAS (395 aa)). Residues 37–286 (LSFHNICYRV…FESAGYHCEA (250 aa)) enclose the ABC transporter domain. ATP is bound by residues 80-87 (GPTGGGKS), 184-190 (RGVSGGE), Glu211, and His243. Thr362 carries the phosphothreonine; by PIM1 modification. An ABC transmembrane type-2 domain is found at 389-651 (LGNPQASIAQ…TIAYLKLLFL (263 aa)). Residues 396–416 (IAQIIVTVVLGLVIGAIYFGL) form a helical membrane-spanning segment. Residues 417-428 (KNDSTGIQNRAG) lie on the Extracellular side of the membrane. The chain crosses the membrane as a helical span at residues 429-449 (VLFFLTTNQCFSSVSAVELFV). The Cytoplasmic portion of the chain corresponds to 450-477 (VEKKLFIHEYISGYYRVSSYFLGKLLSD). A helical membrane pass occupies residues 478 to 498 (LLPMRMLPSIIFTCIVYFMLG). Over 499–506 (LKPKADAF) the chain is Extracellular. The chain crosses the membrane as a helical span at residues 507 to 527 (FVMMFTLMMVAYSASSMALAI). At 528 to 535 (AAGQSVVS) the chain is on the cytoplasmic side. Residues 536–556 (VATLLMTICFVFMMIFSGLLV) traverse the membrane as a helical segment. Topologically, residues 557–630 (NLTTIASWLS…LSPWGLWKNH (74 aa)) are extracellular. The cysteines at positions 592 and 608 are disulfide-linked. Asn596 carries N-linked (GlcNAc...) asparagine glycosylation. Residues 631 to 651 (VALACMIVIFLTIAYLKLLFL) traverse the membrane as a helical segment. The Cytoplasmic segment spans residues 652–655 (KKYS).

Belongs to the ABC transporter superfamily. ABCG family. Eye pigment precursor importer (TC 3.A.1.204) subfamily. As to quaternary structure, homodimer; disulfide-linked. The minimal functional unit is a homodimer, but the major oligomeric form in plasma membrane is a homotetramer with possibility of higher order oligomerization up to homododecamers. Post-translationally, N-glycosylated. Glycosylation-deficient ABCG2 is normally expressed and functional. In terms of processing, phosphorylated. Phosphorylation at Thr-362 by PIM1 is induced by drugs like mitoxantrone and is associated with cells increased drug resistance. It regulates the localization to the plasma membrane, the homooligomerization and therefore, the activity of the transporter. As to expression, highly expressed in placenta. Low expression in small intestine, liver and colon. Expressed in brain (at protein level).

The protein localises to the cell membrane. The protein resides in the apical cell membrane. Its subcellular location is the mitochondrion membrane. The catalysed reaction is ATP + H2O + xenobioticSide 1 = ADP + phosphate + xenobioticSide 2.. It carries out the reaction urate(in) + ATP + H2O = urate(out) + ADP + phosphate + H(+). It catalyses the reaction indoxyl sulfate(in) + ATP + H2O = indoxyl sulfate(out) + ADP + phosphate + H(+). The enzyme catalyses sphing-4-enine 1-phosphate(in) + ATP + H2O = sphing-4-enine 1-phosphate(out) + ADP + phosphate + H(+). The catalysed reaction is estrone 3-sulfate(in) + ATP + H2O = estrone 3-sulfate(out) + ADP + phosphate + H(+). It carries out the reaction dehydroepiandrosterone 3-sulfate(in) + ATP + H2O = dehydroepiandrosterone 3-sulfate(out) + ADP + phosphate + H(+). It catalyses the reaction 4-methylumbelliferone sulfate(in) + ATP + H2O = 4-methylumbelliferone sulfate(out) + ADP + phosphate + H(+). The enzyme catalyses 5,7-dimethyl-2-methylamino-4-(3-pyridylmethyl)-1,3-benzothiazol-6-yl beta-D-glucuronate(in) + ATP + H2O = 5,7-dimethyl-2-methylamino-4-(3-pyridylmethyl)-1,3-benzothiazol-6-yl beta-D-glucuronate(out) + ADP + phosphate + H(+). The catalysed reaction is 4-methylumbelliferone beta-D-glucuronate(in) + ATP + H2O = 4-methylumbelliferone beta-D-glucuronate(out) + ADP + phosphate + H(+). It carries out the reaction 5,7-dimethyl-2-methylamino-4-(3-pyridylmethyl)-1,3-benzothiazol-6-yl sulfate(in) + ATP + H2O = 5,7-dimethyl-2-methylamino-4-(3-pyridylmethyl)-1,3-benzothiazol-6-yl sulfate(out) + ADP + phosphate + H(+). It catalyses the reaction 17beta-estradiol 17-O-(beta-D-glucuronate)(in) + ATP + H2O = 17beta-estradiol 17-O-(beta-D-glucuronate)(out) + ADP + phosphate + H(+). The enzyme catalyses methotrexate(in) + ATP + H2O = methotrexate(out) + ADP + phosphate + H(+). The catalysed reaction is riboflavin(in) + ATP + H2O = riboflavin(out) + ADP + phosphate + H(+). It carries out the reaction pheophorbide a(in) + ATP + H2O = pheophorbide a(out) + ADP + phosphate + H(+). It catalyses the reaction itaconate(in) + ATP + H2O = itaconate(out) + ADP + phosphate + H(+). Its activity is regulated as follows. Specifically inhibited by the fungal toxin fumitremorgin C and Ko143. Its function is as follows. Broad substrate specificity ATP-dependent transporter of the ATP-binding cassette (ABC) family that actively extrudes a wide variety of physiological compounds, dietary toxins and xenobiotics from cells. Involved in porphyrin homeostasis, mediating the export of protoporphyrin IX (PPIX) from both mitochondria to cytosol and cytosol to extracellular space, it also functions in the cellular export of heme. Also mediates the efflux of sphingosine-1-P from cells. Acts as a urate exporter functioning in both renal and extrarenal urate excretion. In kidney, it also functions as a physiological exporter of the uremic toxin indoxyl sulfate. Also involved in the excretion of steroids like estrone 3-sulfate/E1S, 3beta-sulfooxy-androst-5-en-17-one/DHEAS, and other sulfate conjugates. Mediates the secretion of the riboflavin and biotin vitamins into milk. Extrudes pheophorbide a, a phototoxic porphyrin catabolite of chlorophyll, reducing its bioavailability. Plays an important role in the exclusion of xenobiotics from the brain. It confers to cells a resistance to multiple drugs and other xenobiotics including mitoxantrone, pheophorbide, camptothecin, methotrexate, azidothymidine, and the anthracyclines daunorubicin and doxorubicin, through the control of their efflux. In placenta, it limits the penetration of drugs from the maternal plasma into the fetus. May play a role in early stem cell self-renewal by blocking differentiation. In inflammatory macrophages, exports itaconate from the cytosol to the extracellular compartment and limits the activation of TFEB-dependent lysosome biogenesis involved in antibacterial innate immune response. This chain is Broad substrate specificity ATP-binding cassette transporter ABCG2 (ABCG2), found in Homo sapiens (Human).